The following is a 107-amino-acid chain: Chlorobenzene dioxygenase, ferredoxin component (107 aa).

The region spanning 4–99 is the Rieske domain; sequence TYIMRQSDLP…IKVEGGDVHV (96 aa). Residues Cys-43, His-45, Cys-62, and His-65 each contribute to the [2Fe-2S] cluster site.

This sequence belongs to the bacterial ring-hydroxylating dioxygenase ferredoxin component family. In terms of assembly, this dioxygenase system consists of four proteins: the two subunits of the oxygenase component (TecA1 and TecA2), a ferredoxin (TecA3) and a ferredoxin reductase (TecA4). [2Fe-2S] cluster is required as a cofactor.

It participates in aromatic compound metabolism. Functionally, part of the chlorobenzene dioxygenase system that catalyzes the dihydroxylation of a range of aromatic compounds, including chlorinated benzenes and toluenes, and dinuclear aromatics such as biphenyl and dibenzo-p-dioxin. The chain is Chlorobenzene dioxygenase, ferredoxin component from Cupriavidus sp. (strain PS12).